The chain runs to 75 residues: UPF0057 membrane protein At2g24040 (75 aa).

Transmembrane regions (helical) follow at residues 4–24 (SCEL…GVCL) and 33–53 (FFIC…YAIY).

It belongs to the UPF0057 (PMP3) family.

It is found in the membrane. This chain is UPF0057 membrane protein At2g24040, found in Arabidopsis thaliana (Mouse-ear cress).